Here is a 318-residue protein sequence, read N- to C-terminus: uncharacterized protein (318 aa).

The protein to E.coli YfaT and P.aeruginosa PA4490.

This is an uncharacterized protein from Thermotoga maritima (strain ATCC 43589 / DSM 3109 / JCM 10099 / NBRC 100826 / MSB8).